The following is a 430-amino-acid chain: 26S protease regulatory subunit 6A (430 aa).

218 to 225 (GPPGTGKT) contributes to the ATP binding site.

This sequence belongs to the AAA ATPase family. As to quaternary structure, component of the 19S proteasome regulatory particle complex. The 26S proteasome consists of a 20S core particle (CP) and two 19S regulatory subunits (RP). The regulatory particle is made of a lid composed of 9 subunits, a base containing 6 ATPases including the PSMC3 homolog rpt-5 and few additional components.

It is found in the cytoplasm. The protein resides in the nucleus. Its function is as follows. Component of the 26S proteasome, a multiprotein complex involved in the ATP-dependent degradation of ubiquitinated proteins. This complex plays a key role in the maintenance of protein homeostasis by removing misfolded or damaged proteins, which could impair cellular functions, and by removing proteins whose functions are no longer required. Therefore, the proteasome participates in numerous cellular processes, including cell cycle progression, apoptosis, or DNA damage repair. Belongs to the heterohexameric ring of AAA (ATPases associated with diverse cellular activities) proteins that unfolds ubiquitinated target proteins that are concurrently translocated into a proteolytic chamber and degraded into peptides. The sequence is that of 26S protease regulatory subunit 6A from Caenorhabditis elegans.